We begin with the raw amino-acid sequence, 100 residues long: EKC/KEOPS complex subunit GON7 (100 aa).

Methionine 1 is modified (N-acetylmethionine). The tract at residues 50 to 100 (SPVQGEAQDRVAAAPEEALDGDDEDDAEDENNIDNRTNSDGPTAKRPKPPS) is disordered. Positions 66-81 (EALDGDDEDDAEDENN) are enriched in acidic residues.

In terms of assembly, component of the EKC/KEOPS complex composed of at least GON7, TP53RK, TPRKB, OSGEP and LAGE3; the whole complex dimerizes.

Its subcellular location is the nucleus. Component of the EKC/KEOPS complex that is required for the formation of a threonylcarbamoyl group on adenosine at position 37 (t(6)A37) in tRNAs that read codons beginning with adenine. The complex is probably involved in the transfer of the threonylcarbamoyl moiety of threonylcarbamoyl-AMP (TC-AMP) to the N6 group of A37. GON7 plays a supporting role to the catalytic subunit OSGEP in the complex. The polypeptide is EKC/KEOPS complex subunit GON7 (Sus scrofa (Pig)).